The sequence spans 1005 residues: MAKETTARSILGYQTLPTTALIALIYVVAFFSVLVSDQLPSIPHPGSKKLKGFDLDLARRDLEHIAARPHPYNSHANDAVREYLLNRLDDIAWGKDHVHLDNDLRSNGSWASPKYGVYFEGTNLLVKIDGTDDDPHTQIPRGVADGVLFSAHYDSVSTAAGATDDGMGVVTLLQLIQYFAENRQRKTAIFNINNGEEDWLNGAHAFLQHPWANLTSTFLNLEGAASGGRPILFRSTSLKPVKAYDDVPHKLRVRHPHANVIFSDAFARGFVRSGTDYSVYTGIDRHGPAAEGGLLREGLDIAFYKGRSRYHTRWDAPAYTEGGERSLWSMIDVARGVGVGLLNPEDSAKQKSKPGVYFDRPVVLALLWAIGAVLKHNAGSPPPPPKPTVPHSANNASAGTGRPGASTRQPTRSFGSNEDANSERGILARIKSVSVKNVLITVWKQASFWIALIVTVGLQALLAWGYVAINPFTIYSRPYFVLLSFFALSFFSMTLVLQAAFPSSPVKHAIEVREQEKTTILLHLHLLSWIALLLSTILIGKSQVGSFYVVTVWYLGIWAATVIGTLQPILVSKRADDKGKRRARRSRSASTSSSSSSSSSSSSGSDTETERPSTQPASERTPLLFGRANGASNRRKTNSKSKEDGAIGWWIAQVLLTVPPVVMLVGQITSIVLEAMNQTLTDGNSAWSIYLLTALLATMLVLPVAPFSPKLHRGLIFLSAAVFVGFTIYLWVVFPFTRQDPFKVFFQQTVSLDREDVFPMNATGNAVTTHGPKIVTELTGNPAYLRRVLPYLPSSREEDITCSPHEVRTGLETCRWKSNRLAPFPGGKDPWSTWDSDAQRTTTDVSFFKADVTRTAWASARFIVQGRNTRNCRLYFDPPEKSGVRVVRYVVHGGAKGMQPGYPVDLVNGVQEIRLWSRTWGKAWEVDVDWETPLGTGEDEGQLAGRIACEWVEYQSAMVDNGSFGPDRQPKIPALEEALTFLPEWVAVSKAADGLVEASAPFTVV.

The Cytoplasmic segment spans residues 1-14; the sequence is MAKETTARSILGYQ. The helical transmembrane segment at 15 to 35 threads the bilayer; the sequence is TLPTTALIALIYVVAFFSVLV. Residues 36 to 353 lie on the Vacuolar side of the membrane; the sequence is SDQLPSIPHP…PEDSAKQKSK (318 aa). A glycan (N-linked (GlcNAc...) asparagine) is linked at N107. Residues H152 and D164 each contribute to the Zn(2+) site. The Proton acceptor role is filled by E196. Position 197 (E197) interacts with Zn(2+). The N-linked (GlcNAc...) asparagine glycan is linked to N213. 2 residues coordinate Zn(2+): E222 and H311. Residues 354–374 traverse the membrane as a helical segment; that stretch reads PGVYFDRPVVLALLWAIGAVL. The Cytoplasmic segment spans residues 375-448; it reads KHNAGSPPPP…LITVWKQASF (74 aa). The tract at residues 379 to 420 is disordered; that stretch reads GSPPPPPKPTVPHSANNASAGTGRPGASTRQPTRSFGSNEDA. Over residues 406 to 419 the composition is skewed to polar residues; that stretch reads STRQPTRSFGSNED. A helical membrane pass occupies residues 449–469; that stretch reads WIALIVTVGLQALLAWGYVAI. At 470 to 479 the chain is on the vacuolar side; it reads NPFTIYSRPY. The chain crosses the membrane as a helical span at residues 480-500; that stretch reads FVLLSFFALSFFSMTLVLQAA. The Cytoplasmic segment spans residues 501-519; that stretch reads FPSSPVKHAIEVREQEKTT. Residues 520–540 form a helical membrane-spanning segment; sequence ILLHLHLLSWIALLLSTILIG. At 541 to 543 the chain is on the vacuolar side; it reads KSQ. The helical transmembrane segment at 544–564 threads the bilayer; the sequence is VGSFYVVTVWYLGIWAATVIG. Topologically, residues 565–644 are cytoplasmic; it reads TLQPILVSKR…RKTNSKSKED (80 aa). The segment at 577–640 is disordered; it reads DKGKRRARRS…ASNRRKTNSK (64 aa). Low complexity predominate over residues 588–606; it reads SASTSSSSSSSSSSSSGSD. The helical transmembrane segment at 645 to 665 threads the bilayer; that stretch reads GAIGWWIAQVLLTVPPVVMLV. Over 666-686 the chain is Vacuolar; the sequence is GQITSIVLEAMNQTLTDGNSA. Residue N677 is glycosylated (N-linked (GlcNAc...) asparagine). Residues 687 to 707 form a helical membrane-spanning segment; sequence WSIYLLTALLATMLVLPVAPF. At 708–713 the chain is on the cytoplasmic side; it reads SPKLHR. A helical transmembrane segment spans residues 714 to 734; it reads GLIFLSAAVFVGFTIYLWVVF. The Vacuolar portion of the chain corresponds to 735–1005; it reads PFTRQDPFKV…VEASAPFTVV (271 aa). N761 and N961 each carry an N-linked (GlcNAc...) asparagine glycan.

The protein belongs to the peptidase M28 family. The cofactor is Zn(2+).

The protein resides in the vacuole membrane. Functionally, may be involved in vacuolar sorting and osmoregulation. This is Vacuolar membrane protease from Coprinopsis cinerea (strain Okayama-7 / 130 / ATCC MYA-4618 / FGSC 9003) (Inky cap fungus).